The primary structure comprises 71 residues: Translation initiation factor IF-1 (71 aa).

An S1-like domain is found at M1–H71.

This sequence belongs to the IF-1 family. Component of the 30S ribosomal translation pre-initiation complex which assembles on the 30S ribosome in the order IF-2 and IF-3, IF-1 and N-formylmethionyl-tRNA(fMet); mRNA recruitment can occur at any time during PIC assembly.

It localises to the cytoplasm. In terms of biological role, one of the essential components for the initiation of protein synthesis. Stabilizes the binding of IF-2 and IF-3 on the 30S subunit to which N-formylmethionyl-tRNA(fMet) subsequently binds. Helps modulate mRNA selection, yielding the 30S pre-initiation complex (PIC). Upon addition of the 50S ribosomal subunit IF-1, IF-2 and IF-3 are released leaving the mature 70S translation initiation complex. The sequence is that of Translation initiation factor IF-1 from Rickettsia akari (strain Hartford).